The primary structure comprises 249 residues: Type III pantothenate kinase (249 aa).

Residue 6-13 participates in ATP binding; it reads DCGNSFIK. Substrate-binding positions include tyrosine 93 and 100–103; that span reads GMDR. The active-site Proton acceptor is the aspartate 102. Aspartate 122 contacts K(+). An ATP-binding site is contributed by threonine 125. Substrate is bound at residue threonine 181.

Belongs to the type III pantothenate kinase family. As to quaternary structure, homodimer. It depends on NH4(+) as a cofactor. K(+) serves as cofactor.

The protein localises to the cytoplasm. It carries out the reaction (R)-pantothenate + ATP = (R)-4'-phosphopantothenate + ADP + H(+). Its pathway is cofactor biosynthesis; coenzyme A biosynthesis; CoA from (R)-pantothenate: step 1/5. In terms of biological role, catalyzes the phosphorylation of pantothenate (Pan), the first step in CoA biosynthesis. In Pseudomonas putida (strain ATCC 47054 / DSM 6125 / CFBP 8728 / NCIMB 11950 / KT2440), this protein is Type III pantothenate kinase.